The following is a 339-amino-acid chain: Spore coat polysaccharide biosynthesis protein SpsG (339 aa).

The helical transmembrane segment at 241 to 261 (IVAGGISLYEAICIGVPCLVL) threads the bilayer.

This sequence to M.jannaschii MJ1062.

The protein localises to the cell membrane. It participates in spore coat biogenesis; spore coat polysaccharide biosynthesis. This Bacillus subtilis (strain 168) protein is Spore coat polysaccharide biosynthesis protein SpsG (spsG).